A 238-amino-acid chain; its full sequence is LexA repressor (238 aa).

The H-T-H motif DNA-binding region spans 26-46; that stretch reads FDEMKDALDLASKSGIHRLIT. Catalysis depends on for autocatalytic cleavage activity residues Ser158 and Lys196.

It belongs to the peptidase S24 family. Homodimer.

It catalyses the reaction Hydrolysis of Ala-|-Gly bond in repressor LexA.. Functionally, represses a number of genes involved in the response to DNA damage (SOS response), including recA and lexA. In the presence of single-stranded DNA, RecA interacts with LexA causing an autocatalytic cleavage which disrupts the DNA-binding part of LexA, leading to derepression of the SOS regulon and eventually DNA repair. The protein is LexA repressor of Sinorhizobium medicae (strain WSM419) (Ensifer medicae).